Here is a 224-residue protein sequence, read N- to C-terminus: Ribonuclease HII (224 aa).

The 210-residue stretch at Met-1–Ala-210 folds into the RNase H type-2 domain. A divalent metal cation contacts are provided by Asp-7, Glu-8, and Asp-105.

It belongs to the RNase HII family. The cofactor is Mn(2+). Mg(2+) is required as a cofactor.

It localises to the cytoplasm. It carries out the reaction Endonucleolytic cleavage to 5'-phosphomonoester.. Functionally, endonuclease that specifically degrades the RNA of RNA-DNA hybrids. The protein is Ribonuclease HII of Pyrococcus furiosus (strain ATCC 43587 / DSM 3638 / JCM 8422 / Vc1).